A 109-amino-acid chain; its full sequence is RNA-binding protein Hfq (109 aa).

Residues 9–68 (DPFLNALRKEKVSVSVYLVNGIKLQGQVEAFDQFCIVLRNTVNQMVYKHAISTIVPAKSV) enclose the Sm domain. The segment at 77 to 109 (PYHQNSNDEQDENVDDIHSDDLEIQENEGNIHE) is disordered.

Belongs to the Hfq family. Homohexamer.

Functionally, RNA chaperone that binds small regulatory RNA (sRNAs) and mRNAs to facilitate mRNA translational regulation in response to envelope stress, environmental stress and changes in metabolite concentrations. Also binds with high specificity to tRNAs. This chain is RNA-binding protein Hfq, found in Francisella tularensis subsp. holarctica (strain FTNF002-00 / FTA).